Reading from the N-terminus, the 178-residue chain is Endothelin-2 (178 aa).

Positions 1-24 (MVSVPTAWCSVALALLVALHEGKD) are cleaved as a signal peptide. A propeptide spanning residues 25-46 (QAAATLEQPASSPRARAAHLRL) is cleaved from the precursor. 2 cysteine pairs are disulfide-bonded: C49–C63 and C51–C59. A propeptide spanning residues 70–178 (VNTPGQTAPY…RTTHSRHRKR (109 aa)) is cleaved from the precursor. Positions 96–111 (CECSSARDPACATFCH) are endothelin-like. The disordered stretch occupies residues 154-178 (KTHFAKRQQEATREPRTTHSRHRKR). Residues 160–170 (RQQEATREPRT) show a composition bias toward basic and acidic residues.

Belongs to the endothelin/sarafotoxin family.

It is found in the secreted. Functionally, endothelins are endothelium-derived vasoconstrictor peptides. The chain is Endothelin-2 (EDN2) from Oryctolagus cuniculus (Rabbit).